The sequence spans 212 residues: Outer-membrane lipoprotein carrier protein (212 aa).

The N-terminal stretch at 1-25 (MRKRILVSACAALAVFAAHMPTALA) is a signal peptide.

It belongs to the LolA family. In terms of assembly, monomer.

It is found in the periplasm. In terms of biological role, participates in the translocation of lipoproteins from the inner membrane to the outer membrane. Only forms a complex with a lipoprotein if the residue after the N-terminal Cys is not an aspartate (The Asp acts as a targeting signal to indicate that the lipoprotein should stay in the inner membrane). The chain is Outer-membrane lipoprotein carrier protein from Cupriavidus pinatubonensis (strain JMP 134 / LMG 1197) (Cupriavidus necator (strain JMP 134)).